The primary structure comprises 357 residues: DNA replication and repair protein RecF (357 aa).

Position 31 to 38 (31 to 38) interacts with ATP; sequence GQNGAGKT.

The protein belongs to the RecF family.

Its subcellular location is the cytoplasm. In terms of biological role, the RecF protein is involved in DNA metabolism; it is required for DNA replication and normal SOS inducibility. RecF binds preferentially to single-stranded, linear DNA. It also seems to bind ATP. In Coxiella burnetii (strain CbuK_Q154) (Coxiella burnetii (strain Q154)), this protein is DNA replication and repair protein RecF.